The primary structure comprises 436 residues: GTPase Der (436 aa).

EngA-type G domains follow at residues 4-167 and 176-351; these read PVIA…PKIE and IRFS…ESHS. GTP-binding positions include 10–17, 57–61, 119–122, 182–189, 229–233, and 294–297; these read GRPNVGKS, DTGGI, NKVD, DTAGM, and NKWD. Residues 352 to 436 enclose the KH-like domain; it reads IRVQTNVLND…PIHIIARARD (85 aa).

The protein belongs to the TRAFAC class TrmE-Era-EngA-EngB-Septin-like GTPase superfamily. EngA (Der) GTPase family. As to quaternary structure, associates with the 50S ribosomal subunit.

In terms of biological role, GTPase that plays an essential role in the late steps of ribosome biogenesis. This Bacillus cereus (strain G9842) protein is GTPase Der.